Consider the following 66-residue polypeptide: Small ribosomal subunit protein bS21 (66 aa).

It belongs to the bacterial ribosomal protein bS21 family.

The chain is Small ribosomal subunit protein bS21 from Solidesulfovibrio magneticus (strain ATCC 700980 / DSM 13731 / RS-1) (Desulfovibrio magneticus).